The chain runs to 89 residues: Small ribosomal subunit protein uS15 (89 aa).

It belongs to the universal ribosomal protein uS15 family. As to quaternary structure, part of the 30S ribosomal subunit. Forms a bridge to the 50S subunit in the 70S ribosome, contacting the 23S rRNA.

One of the primary rRNA binding proteins, it binds directly to 16S rRNA where it helps nucleate assembly of the platform of the 30S subunit by binding and bridging several RNA helices of the 16S rRNA. Functionally, forms an intersubunit bridge (bridge B4) with the 23S rRNA of the 50S subunit in the ribosome. The polypeptide is Small ribosomal subunit protein uS15 (Psychromonas ingrahamii (strain DSM 17664 / CCUG 51855 / 37)).